Reading from the N-terminus, the 376-residue chain is Alpha-ketoglutarate-dependent dioxygenase esdpJ (376 aa).

Fe cation is bound by residues H145 and D147. T202 serves as a coordination point for 2-oxoglutarate. The tract at residues 234-260 (YNQSSQEKKSEIHVEPRGSPNNVGSDL) is disordered. The segment covering 239-249 (QEKKSEIHVEP) has biased composition (basic and acidic residues). H335 is a Fe cation binding site. Residues R347 and R351 each coordinate 2-oxoglutarate. The segment at 354–376 (GVGEQPYLDPESKTRREALGEFN) is disordered. The span at 363 to 376 (PESKTRREALGEFN) shows a compositional bias: basic and acidic residues.

This sequence belongs to the TfdA dioxygenase family. It depends on Fe(2+) as a cofactor.

Its function is as follows. Alpha-ketoglutarate-dependent dioxygenas; part of the cluster that mediates the biosynthesis of shearones, diterpenoid pyrones (DPs) which are structurally diverse meroterpenoids consisting of a diterpene linked by a pyrone, and which may exhibit a range of bioactivities. The alpha-ketoglutarate-dependent dioxygenase esdpJ seems not to be involved in this pathway. The molecular scaffold is commonly biosynthesized by a series of enzymes including the non-reducing polyketide synthase (NR-PKS) esdpA that generates an alpha-pyrone; the prenyltransferase esdpC that attaches a geranylgeranyl pyrophosphate (GGPP) produced by the GGPP synthase (GGPPS) esdpD onto the pyrone unit; the FAD-dependent monooxygenase esdpE that converts an olefin on the diterpene unit into an epoxide; and the terpene cyclase esdpB that catalyzes the cyclization reactions to give the molecular backbone shearone A. In the modification steps, esdpF oxidizes the hydroxy group to a ketone at C-3 and esdpG then attaches hydroxy groups at both C-11 and C-12. After that, esdpI hydroxylates at C-20 and esdpH hydroxylates at C-6'. The ether bridge is generated by nucleophilic attack of the hydroxy group at C-20 to the carbonyl carbon at C-3. EsdpH can also functions prior to esdpI. The different combinations of these modification enzymes lead to the production of diverse shearone derivatives, shearone I being the end product of the pathway. This chain is Alpha-ketoglutarate-dependent dioxygenase esdpJ, found in Penicillium shearii (Eupenicillium shearii).